The sequence spans 971 residues: Protein cwh43 (971 aa).

Residues 1-242 (MTEKTSSLVF…PSSFATRKKE (242 aa)) form a PGAP2-like region. The next 19 membrane-spanning stretches (helical) occupy residues 15–35 (VALVHTICSFAAFFIPLALAL), 71–91 (VFQWLIALTATPRLLVLLLWF), 101–121 (VIITTALGVLRTALCGGWVYV), 129–149 (WHDIFMIGYLISNAPWFILVS), 161–181 (IRNIGSALFVLTIFPLIYWYI), 188–208 (IPGAYTVYAFFEWSLILWDIL), 286–306 (VYLSFVFWSVLTSLGLLVWYF), 313–333 (ISGYEACILFELSPFLLGIPL), 336–356 (KFASKVPVIFLFLNVIGIAAY), 366–386 (FVTAFSVCCECLAWTSLFSNI), 397–417 (ISTFLFGLLASSIAKYSFFSN), 432–452 (QIPALIVGIIACLIFAIFHVQ), 467–487 (ITALSAALSLGTVLFCLHTFL), 509–529 (YPHGAVSIVVSICAVLVAPYL), 532–552 (SGAFMLIGFVLACFGSYFMYI), 555–575 (GWCSYLGGLIFTSYVLIYSFA), 588–608 (VWGGAFLVYILYSLAHVWVVA), 622–642 (TSYILIFIGWNLAALVPAYSG), and 673–693 (LLTGFCLALMALKFAIQNMPP). The segment at 243–971 (KGEHLSYAEA…LVVHEPWYYD (729 aa)) is PGAP2IP-like. Histidine 826 is a catalytic residue.

It in the N-terminal section; belongs to the PGAP2 family. The protein in the C-terminal section; belongs to the PGAP2IP family.

The protein localises to the cell membrane. It localises to the endoplasmic reticulum membrane. In terms of biological role, involved in the maintenance of cell wall integrity. Required for the replacement of the diacylglycerol moiety by ceramides during GPI-anchor maturation. This chain is Protein cwh43 (cwh43), found in Schizosaccharomyces pombe (strain 972 / ATCC 24843) (Fission yeast).